The primary structure comprises 512 residues: Secreted triacylglycerol lipase LIP5 (512 aa).

The first 17 residues, 1-17, serve as a signal peptide directing secretion; it reads MMYASLVHWLALAVALA. Cysteine 118 and cysteine 292 form a disulfide bridge. Serine 203 acts as the Nucleophile in catalysis. An N-linked (GlcNAc...) asparagine glycan is attached at asparagine 316. The active site involves aspartate 352. The N-linked (GlcNAc...) asparagine glycan is linked to asparagine 361. Histidine 386 is a catalytic residue. An N-linked (GlcNAc...) asparagine glycan is attached at asparagine 453. Residues 480 to 512 form a disordered region; that stretch reads KGDISPGEGGDHTKESKKAAAKFKAEKKHGKHH. The span at 488 to 497 shows a compositional bias: basic and acidic residues; it reads GGDHTKESKK. Over residues 498-512 the composition is skewed to basic residues; sequence AAAKFKAEKKHGKHH.

This sequence belongs to the AB hydrolase superfamily. Lipase family. Class Lip subfamily.

It localises to the secreted. The enzyme catalyses a triacylglycerol + H2O = a diacylglycerol + a fatty acid + H(+). The catalysed reaction is a monoacylglycerol + H2O = glycerol + a fatty acid + H(+). It catalyses the reaction a diacylglycerol + H2O = a monoacylglycerol + a fatty acid + H(+). Its function is as follows. Secreted lipase that hydrolyzes acylglycerol lipids such as triacylglycerols and consequently releases free fatty acid. Can hydrolyze 4-nitrophenyl palmitate to release 4-nitrophenol and palmitoic acid. Due to an absence of fatty acid synthase genes in Malassezia species, secretory lipases are essential for the yeast to generate free fatty acids from degradation of sebum and assimilate them as lipid sources for growth. Plays an essential role at the pathogen-host interface during disease progression. The polypeptide is Secreted triacylglycerol lipase LIP5 (Malassezia restricta (strain ATCC 96810 / NBRC 103918 / CBS 7877) (Seborrheic dermatitis infection agent)).